Consider the following 240-residue polypeptide: EF-hand domain-containing protein D2 (240 aa).

An N-acetylalanine modification is found at A2. Phosphoserine is present on S11. The segment at 13 to 38 (RLQMEGEGGGETPEQPGLNGAAAAAA) is disordered. A phosphoserine mark is found at S74 and S76. Residue Y83 is modified to Phosphotyrosine. EF-hand domains follow at residues 92 to 127 (KQIKDMEKMFKQYDAGRDGFIDLMELKLMMEKLGAP) and 128 to 163 (QTHLGLKNMIKEVDEDFDSKLSFREFLLIFRKAAAG). Ca(2+)-binding residues include D105, D109, E116, D141, D143, D145, K147, and E152. K233 is modified (N6-acetyllysine).

Interacts with CASP9; with inactive form. Found in lymphocytes; preferentially expressed in CD8+ cells.

It localises to the membrane raft. Functionally, may regulate B-cell receptor (BCR)-induced immature and primary B-cell apoptosis. Plays a role as negative regulator of the canonical NF-kappa-B-activating branch. Controls spontaneous apoptosis through the regulation of BCL2L1 abundance. This Homo sapiens (Human) protein is EF-hand domain-containing protein D2 (EFHD2).